Here is a 180-residue protein sequence, read N- to C-terminus: Flavodoxin 2 (180 aa).

Residues 4-173 (IGLFFGSNTG…RVAAWLAQIA (170 aa)) form the Flavodoxin-like domain. FMN-binding positions include 10-15 (SNTGKT), Thr57, Gly61, Asp99, 106-108 (NYL), and Asp155.

FMN is required as a cofactor.

In terms of biological role, flavodoxins are low-potential electron donors to a number of redox enzymes. NifF is the electron donor to nitrogenase, and is thus implicated in nitrogen fixation. Does not function as an electron donor to nitrite reductase. In Azotobacter vinelandii, this protein is Flavodoxin 2.